The primary structure comprises 163 residues: Cytochrome c-type biogenesis protein CcmE (163 aa).

Residues 1-8 are Cytoplasmic-facing; it reads MNPRRKKR. Residues 9–29 traverse the membrane as a helical; Signal-anchor for type II membrane protein segment; that stretch reads LTIILAISAGLAAVIGLVLYA. The Periplasmic segment spans residues 30-163; the sequence is LSQNIDLFYT…TEAQLKGSKQ (134 aa). 2 residues coordinate heme: H131 and Y135.

The protein belongs to the CcmE/CycJ family.

The protein resides in the cell inner membrane. Functionally, heme chaperone required for the biogenesis of c-type cytochromes. Transiently binds heme delivered by CcmC and transfers the heme to apo-cytochromes in a process facilitated by CcmF and CcmH. The polypeptide is Cytochrome c-type biogenesis protein CcmE (Aeromonas hydrophila subsp. hydrophila (strain ATCC 7966 / DSM 30187 / BCRC 13018 / CCUG 14551 / JCM 1027 / KCTC 2358 / NCIMB 9240 / NCTC 8049)).